The primary structure comprises 221 residues: MLEDLRLYQLISPSLPVGSFTYSQGLEWAIEKGWVTNVTELKHWLSNQLMDSLATLELPVLAKLTQLLQQEEWQQAQDWCDFIIANRETKELRLEERQRGLAFSMLLPKLGIELNQTTLPMVKQTQVAAFALAANHWNLTPTKLAAAYAWGWLENAVIVGIKLVPLGQSAGQQLLLEMADVIPQAVEKSQHWPEHLIGSFTPAQVLASSRHESQYTRLFRS.

It belongs to the UreF family. UreD, UreF and UreG form a complex that acts as a GTP-hydrolysis-dependent molecular chaperone, activating the urease apoprotein by helping to assemble the nickel containing metallocenter of UreC. The UreE protein probably delivers the nickel.

It localises to the cytoplasm. In terms of biological role, required for maturation of urease via the functional incorporation of the urease nickel metallocenter. The polypeptide is Urease accessory protein UreF (Aliivibrio fischeri (strain ATCC 700601 / ES114) (Vibrio fischeri)).